Consider the following 1039-residue polypeptide: Probable inorganic carbon transporter subunit DabA 1 (1039 aa).

Zn(2+) contacts are provided by C462, D464, H721, and C736.

This sequence belongs to the inorganic carbon transporter (TC 9.A.2) DabA family. Forms a complex with DabB. It depends on Zn(2+) as a cofactor.

It is found in the cell inner membrane. Part of an energy-coupled inorganic carbon pump. This Nitrobacter hamburgensis (strain DSM 10229 / NCIMB 13809 / X14) protein is Probable inorganic carbon transporter subunit DabA 1.